The chain runs to 146 residues: Large ribosomal subunit protein uL15 (146 aa).

Positions 1–56 (MKLHELRAAEGANKASKRVGRGTGSGLGKTSGKGQNGQNSRSGGGVRPGFEGGQMP) are disordered. Gly residues-rich tracts occupy residues 21 to 35 (RGTG…GKGQ) and 42 to 52 (SGGGVRPGFEG).

Belongs to the universal ribosomal protein uL15 family. As to quaternary structure, part of the 50S ribosomal subunit.

Its function is as follows. Binds to the 23S rRNA. The protein is Large ribosomal subunit protein uL15 of Clostridium botulinum (strain Loch Maree / Type A3).